Here is a 239-residue protein sequence, read N- to C-terminus: Tetratricopeptide repeat protein 9B (239 aa).

Positions 1 to 54 are disordered; it reads MQRGALSPVLMLSAAPEPPPRPPPALSPPGPGSAPRHGSARSGPAPEPSGGLAA. S7 and S27 each carry phosphoserine. Pro residues predominate over residues 16–32; sequence PEPPPRPPPALSPPGPG. A TPR 1 repeat occupies 63-97; it reads AVAFKAEGQRCYREKKFREAIGKYHRALLQLKAAQ. The segment at 98-121 is disordered; sequence GARPGGLPTPSPGPTTSPGPARLS. Residues 104–114 are compositionally biased toward pro residues; that stretch reads LPTPSPGPTTS. Residues 169–202 form a TPR 2 repeat; the sequence is FKATYRAGIAFYHLGDYARALRYLQEARSREPTD.

This sequence belongs to the TTC9 family.

This Mus musculus (Mouse) protein is Tetratricopeptide repeat protein 9B (Ttc9b).